A 453-amino-acid chain; its full sequence is tRNA modification GTPase MnmE (453 aa).

Arg-22, Glu-79, and Lys-119 together coordinate (6S)-5-formyl-5,6,7,8-tetrahydrofolate. The TrmE-type G domain maps to 215-376 (GMKVVIAGRP…LKQHLKSLMG (162 aa)). Asn-225 contacts K(+). GTP is bound by residues 225–230 (NAGKSS), 244–250 (TEIAGTT), 269–272 (DTAG), and 334–337 (NKAD). Ser-229 provides a ligand contact to Mg(2+). Residues Thr-244, Ile-246, and Thr-249 each coordinate K(+). Thr-250 provides a ligand contact to Mg(2+). Lys-453 is a (6S)-5-formyl-5,6,7,8-tetrahydrofolate binding site.

Belongs to the TRAFAC class TrmE-Era-EngA-EngB-Septin-like GTPase superfamily. TrmE GTPase family. In terms of assembly, homodimer. Heterotetramer of two MnmE and two MnmG subunits. K(+) is required as a cofactor.

It is found in the cytoplasm. In terms of biological role, exhibits a very high intrinsic GTPase hydrolysis rate. Involved in the addition of a carboxymethylaminomethyl (cmnm) group at the wobble position (U34) of certain tRNAs, forming tRNA-cmnm(5)s(2)U34. The protein is tRNA modification GTPase MnmE of Shewanella denitrificans (strain OS217 / ATCC BAA-1090 / DSM 15013).